The sequence spans 67 residues: Lantibiotic Flvbeta.b (67 aa).

Residues M1 to A34 constitute a propeptide, cleaved by FlvT. S36 is subject to 2,3-didehydroalanine (Ser); by FlvM2. 2,3-didehydrobutyrine; by FlvM2 occurs at positions 39 and 43. Cross-links (beta-methyllanthionine (Thr-Cys); by FlvM2) lie at residues T50–C56, T58–C61, and T62–C65.

Contains DL-beta-methyllanthionine, when coepressed in E.coli with the flavecin synthetase FlvM2.

The protein resides in the secreted. Functionally, lanthionine-containing peptide antibiotic (lantibiotic) only active on Gram-positive bacteria in synergy with Flvalpha.a. Is not active in absence of Flvalpha.a, which is encoded by the same operon than Flvbeta.b. The bactericidal activity of lantibiotics is based on depolarization of energized bacterial cytoplasmic membranes, initiated by the formation of aqueous transmembrane pores. This is Lantibiotic Flvbeta.b from Ruminococcus flavefaciens.